Here is a 293-residue protein sequence, read N- to C-terminus: Small ribosomal subunit biogenesis GTPase RsgA (293 aa).

In terms of domain architecture, CP-type G spans 63-223; that stretch reads KNELVRPPIA…VADTPGFSSL (161 aa). Residues 112-115 and 166-174 contribute to the GTP site; these read SKMD and GQSGVGKSS. The Zn(2+) site is built by Cys-247, Cys-252, His-254, and Cys-260.

It belongs to the TRAFAC class YlqF/YawG GTPase family. RsgA subfamily. Monomer. Associates with 30S ribosomal subunit, binds 16S rRNA. Requires Zn(2+) as cofactor.

The protein localises to the cytoplasm. Its function is as follows. One of several proteins that assist in the late maturation steps of the functional core of the 30S ribosomal subunit. Helps release RbfA from mature subunits. May play a role in the assembly of ribosomal proteins into the subunit. Circularly permuted GTPase that catalyzes slow GTP hydrolysis, GTPase activity is stimulated by the 30S ribosomal subunit. This Bacillus anthracis protein is Small ribosomal subunit biogenesis GTPase RsgA.